Reading from the N-terminus, the 307-residue chain is Aquaporin Lacbi1:387054 (307 aa).

Residues 1-40 are Cytoplasmic-facing; sequence MSNAPLVHLSDLQKRLRVFAVWEKVRNDGKVHWAIECFAE. Residues 41–61 form a helical membrane-spanning segment; that stretch reads MFGVFLYVYFGLGSTAGWVIG. Over 62–68 the chain is Extracellular; the sequence is NIIKETN. Residues 69-89 form a helical membrane-spanning segment; sequence LSSILQIGLAYAFGIWFAIGL. Residues 90–120 lie on the Cytoplasmic side of the membrane; it reads CSSSSGGHFNPCVTLSFVVFKGFPKLKACRY. Positions 99–101 match the NPA 1 motif; sequence NPC. A helical membrane pass occupies residues 121-141; sequence IIAQILGAYIASALVYSQWNV. The Extracellular segment spans residues 142–157; sequence LIEECTLGLIKAKAYD. The helical transmembrane segment at 158 to 178 threads the bilayer; that stretch reads TTMFTPNGPAGIFALYLVPGA. The NPA 2 signature appears at 167–169; sequence AGI. The Cytoplasmic segment spans residues 179-183; that stretch reads QSVPR. The chain crosses the membrane as a helical span at residues 184-203; sequence ALLNEFVNSTLIGMIIWAAL. At 204–216 the chain is on the extracellular side; that stretch reads DPTNMMVPPAMGP. Residues 217–237 form a helical membrane-spanning segment; sequence LFISLAYAAVIWGFATPAVAL. The Cytoplasmic segment spans residues 238 to 264; the sequence is NTARDLGARLFAMSIWGTKAAGSGYSA. The chain crosses the membrane as a helical span at residues 265 to 285; sequence IACLINIPATLLGVFLYEVFF. At 286 to 307 the chain is on the extracellular side; sequence TDSDRGKLLPILNGKKLKHIFS.

Belongs to the MIP/aquaporin (TC 1.A.8) family.

Its subcellular location is the membrane. It carries out the reaction H2O(in) = H2O(out). It catalyses the reaction NH4(+)(in) = NH4(+)(out). The enzyme catalyses urea(in) = urea(out). The catalysed reaction is glycerol(in) = glycerol(out). Functionally, water channel required to facilitate the transport of water across membranes. In addition to water, also shows strong ammonium transport activity. Also enables low but statistically significant glycerol and urea permeability. May be involved in fungal nitrogen (ammonium) support of the plant host in symbiosis. This is Aquaporin Lacbi1:387054 from Laccaria bicolor (strain S238N-H82 / ATCC MYA-4686) (Bicoloured deceiver).